A 57-amino-acid chain; its full sequence is MAGTSGLLNAVKPKIQTIDIQAAAGWGIAAAAGAIWVVQPFGWIKKTFIDPPPTEEK.

Over 1-23 the chain is Mitochondrial matrix; the sequence is MAGTSGLLNAVKPKIQTIDIQAA. A helical transmembrane segment spans residues 24–44; that stretch reads AGWGIAAAAGAIWVVQPFGWI. The Mitochondrial intermembrane segment spans residues 45 to 57; it reads KKTFIDPPPTEEK.

It belongs to the UQCR11/QCR10 family. In terms of assembly, component of the ubiquinol-cytochrome c oxidoreductase (cytochrome b-c1 complex, complex III, CIII), a multisubunit enzyme composed of 10 subunits. The complex is composed of 3 respiratory subunits cytochrome b (MT-CYB), cytochrome c1 (CYC1-1 or CYC1-2) and Rieske protein (UCR1-1 or UCR1-2), 2 core protein subunits MPPalpha1 (or MPPalpha2) and MPPB, and 5 low-molecular weight protein subunits QCR7-1 (or QCR7-2), UCRQ-1 (or UCRQ-2), QCR9, UCRY and probably QCR6-1 (or QCR6-2). The complex exists as an obligatory dimer and forms supercomplexes (SCs) in the inner mitochondrial membrane with NADH-ubiquinone oxidoreductase (complex I, CI), resulting in different assemblies (supercomplexes SCI(1)III(2) and SCI(2)III(4)).

It is found in the mitochondrion inner membrane. Functionally, component of the ubiquinol-cytochrome c oxidoreductase, a multisubunit transmembrane complex that is part of the mitochondrial electron transport chain which drives oxidative phosphorylation. The respiratory chain contains 3 multisubunit complexes succinate dehydrogenase (complex II, CII), ubiquinol-cytochrome c oxidoreductase (cytochrome b-c1 complex, complex III, CIII) and cytochrome c oxidase (complex IV, CIV), that cooperate to transfer electrons derived from NADH and succinate to molecular oxygen, creating an electrochemical gradient over the inner membrane that drives transmembrane transport and the ATP synthase. The cytochrome b-c1 complex catalyzes electron transfer from ubiquinol to cytochrome c, linking this redox reaction to translocation of protons across the mitochondrial inner membrane, with protons being carried across the membrane as hydrogens on the quinol. In the process called Q cycle, 2 protons are consumed from the matrix, 4 protons are released into the intermembrane space and 2 electrons are passed to cytochrome c. The protein is Cytochrome b-c1 complex subunit 10, mitochondrial (UCRY) of Arabidopsis thaliana (Mouse-ear cress).